We begin with the raw amino-acid sequence, 287 residues long: S-methyl-5'-thioadenosine phosphorylase (287 aa).

Residues Thr-13 and 55–56 each bind phosphate; that span reads RH. A substrate-binding site is contributed by Met-186. Thr-187 contributes to the phosphate binding site. Residue 210-212 participates in substrate binding; the sequence is DYD.

It belongs to the PNP/MTAP phosphorylase family. MTAP subfamily. Homohexamer. Dimer of a homotrimer.

It catalyses the reaction S-methyl-5'-thioadenosine + phosphate = 5-(methylsulfanyl)-alpha-D-ribose 1-phosphate + adenine. The protein operates within amino-acid biosynthesis; L-methionine biosynthesis via salvage pathway; S-methyl-5-thio-alpha-D-ribose 1-phosphate from S-methyl-5'-thioadenosine (phosphorylase route): step 1/1. In terms of biological role, catalyzes the reversible phosphorylation of S-methyl-5'-thioadenosine (MTA) to adenine and 5-methylthioribose-1-phosphate. Involved in the breakdown of MTA, a major by-product of polyamine biosynthesis. Responsible for the first step in the methionine salvage pathway after MTA has been generated from S-adenosylmethionine. Has broad substrate specificity with 6-aminopurine nucleosides as preferred substrates. The polypeptide is S-methyl-5'-thioadenosine phosphorylase (Leptospira interrogans serogroup Icterohaemorrhagiae serovar copenhageni (strain Fiocruz L1-130)).